The sequence spans 178 residues: Actin-related protein 2/3 complex subunit 3-A (178 aa).

It belongs to the ARPC3 family. As to quaternary structure, component of the Arp2/3 complex composed of actr2/arp2, actr3/arp3, arpc1 (arpc1a or arpc1b), arpc2, arpc3, arpc4 and arpc5.

The protein localises to the cytoplasm. It is found in the cytoskeleton. Its subcellular location is the cell projection. The protein resides in the nucleus. Its function is as follows. Component of the Arp2/3 complex, a multiprotein complex that mediates actin polymerization upon stimulation by nucleation-promoting factor (NPF). The Arp2/3 complex mediates the formation of branched actin networks in the cytoplasm, providing the force for cell motility. In addition to its role in the cytoplasmic cytoskeleton, the Arp2/3 complex also promotes actin polymerization in the nucleus, thereby regulating gene transcription and repair of damaged DNA. The Arp2/3 complex promotes homologous recombination (HR) repair in response to DNA damage by promoting nuclear actin polymerization, leading to drive motility of double-strand breaks (DSBs). The polypeptide is Actin-related protein 2/3 complex subunit 3-A (arpc3-a) (Xenopus laevis (African clawed frog)).